Reading from the N-terminus, the 1356-residue chain is RHO1 GDP-GTP exchange protein 2 (1356 aa).

The residue at position 2 (S2) is an N-acetylserine. 2 disordered regions span residues 74–94 and 109–175; these read RRSG…EMKG and EVPD…PRNE. Residue S76 is modified to Phosphoserine. 2 stretches are compositionally biased toward polar residues: residues 109–125 and 147–157; these read EVPD…TPVS and HIYSTSNSASR. S193 is subject to Phosphoserine. Disordered stretches follow at residues 202–291, 303–362, 383–409, 531–571, and 626–645; these read LKKQ…RSMS, SFQS…SSSN, SVSG…VMSA, GNHS…SQQK, and NISM…TSSV. The span at 204–221 shows a compositional bias: polar residues; sequence KQSSFSTGSASTTPTQAR. S223 carries the post-translational modification Phosphoserine. A compositionally biased stretch (basic and acidic residues) spans 235 to 244; sequence SSKDLHEQHQ. Over residues 250-265 the composition is skewed to low complexity; the sequence is QHNNINNHNNNNTNNN. Positions 271 to 281 are enriched in polar residues; it reads VGSSNSNYPQH. The segment covering 282-291 has biased composition (low complexity); sequence SHSISSRSMS. Residues 303–325 show a composition bias toward polar residues; the sequence is SFQSKTSNSRKATQKYDITSNPF. Over residues 329–338 the composition is skewed to basic residues; that stretch reads HHHHHHHHSS. Composition is skewed to low complexity over residues 339–362 and 383–401; these read NSHS…SSSN and SVSG…TPLS. A phosphoserine mark is found at S566 and S628. The region spanning 659–846 is the DH domain; that stretch reads KRQEAIYEVY…RDFMKRIDQA (188 aa). A CNH domain is found at 1034–1336; the sequence is TNKINSVTSC…RLLQTSTQEI (303 aa).

Stimulates the exchange of RHO1 GDP-bound form into GTP-bound form. The polypeptide is RHO1 GDP-GTP exchange protein 2 (ROM2) (Saccharomyces cerevisiae (strain ATCC 204508 / S288c) (Baker's yeast)).